An 87-amino-acid polypeptide reads, in one-letter code: Small ribosomal subunit protein uS15c (87 aa).

Belongs to the universal ribosomal protein uS15 family. Part of the 30S ribosomal subunit.

It is found in the plastid. The protein localises to the chloroplast. The protein is Small ribosomal subunit protein uS15c (rps15) of Coffea arabica (Arabian coffee).